The sequence spans 136 residues: ATP synthase epsilon chain (136 aa).

The protein belongs to the ATPase epsilon chain family. As to quaternary structure, F-type ATPases have 2 components, CF(1) - the catalytic core - and CF(0) - the membrane proton channel. CF(1) has five subunits: alpha(3), beta(3), gamma(1), delta(1), epsilon(1). CF(0) has three main subunits: a, b and c.

Its subcellular location is the cell inner membrane. Functionally, produces ATP from ADP in the presence of a proton gradient across the membrane. This is ATP synthase epsilon chain from Afipia carboxidovorans (strain ATCC 49405 / DSM 1227 / KCTC 32145 / OM5) (Oligotropha carboxidovorans).